Consider the following 237-residue polypeptide: Ribosomal RNA small subunit methyltransferase G (237 aa).

S-adenosyl-L-methionine-binding positions include glycine 78, phenylalanine 83, 129-130, and arginine 148; that span reads AE. The disordered stretch occupies residues 216–237; the sequence is SKKKETPNKYPRKAGTPNKKPL.

It belongs to the methyltransferase superfamily. RNA methyltransferase RsmG family.

It is found in the cytoplasm. Its function is as follows. Specifically methylates the N7 position of a guanine in 16S rRNA. The protein is Ribosomal RNA small subunit methyltransferase G of Streptococcus agalactiae serotype V (strain ATCC BAA-611 / 2603 V/R).